Reading from the N-terminus, the 261-residue chain is Small ribosomal subunit protein eS1B (261 aa).

Positions 1–18 (MTLGKNKRISKGGKRGKK) are enriched in basic residues. The interval 1 to 23 (MTLGKNKRISKGGKRGKKKAQET) is disordered.

It belongs to the eukaryotic ribosomal protein eS1 family. As to quaternary structure, component of the small ribosomal subunit. Mature ribosomes consist of a small (40S) and a large (60S) subunit. The 40S subunit contains about 33 different proteins and 1 molecule of RNA (18S). The 60S subunit contains about 49 different proteins and 3 molecules of RNA (25S, 5.8S and 5S).

The protein resides in the cytoplasm. The protein is Small ribosomal subunit protein eS1B of Trypanosoma cruzi (strain CL Brener).